The chain runs to 143 residues: Small ribosomal subunit protein uS9A (143 aa).

Ser-2 bears the N-acetylserine mark. Lys-30 is covalently cross-linked (Glycyl lysine isopeptide (Lys-Gly) (interchain with G-Cter in ubiquitin)). Residue Ser-34 is modified to Phosphoserine. Glycyl lysine isopeptide (Lys-Gly) (interchain with G-Cter in ubiquitin) cross-links involve residues Lys-47 and Lys-59. Residue Ser-61 is modified to Phosphoserine. Thr-70 carries the post-translational modification Phosphothreonine. Position 76 is a phosphoserine (Ser-76). Positions 123–143 (RPEPKKFGGKGARSRFQKSYR) are disordered. Residues 134–143 (ARSRFQKSYR) show a composition bias toward basic residues.

Belongs to the universal ribosomal protein uS9 family. In terms of assembly, component of the small ribosomal subunit (SSU). Mature yeast ribosomes consist of a small (40S) and a large (60S) subunit. The 40S small subunit contains 1 molecule of ribosomal RNA (18S rRNA) and 33 different proteins (encoded by 57 genes). The large 60S subunit contains 3 rRNA molecules (25S, 5.8S and 5S rRNA) and 46 different proteins (encoded by 81 genes).

Its subcellular location is the cytoplasm. Functionally, component of the ribosome, a large ribonucleoprotein complex responsible for the synthesis of proteins in the cell. The small ribosomal subunit (SSU) binds messenger RNAs (mRNAs) and translates the encoded message by selecting cognate aminoacyl-transfer RNA (tRNA) molecules. The large subunit (LSU) contains the ribosomal catalytic site termed the peptidyl transferase center (PTC), which catalyzes the formation of peptide bonds, thereby polymerizing the amino acids delivered by tRNAs into a polypeptide chain. The nascent polypeptides leave the ribosome through a tunnel in the LSU and interact with protein factors that function in enzymatic processing, targeting, and the membrane insertion of nascent chains at the exit of the ribosomal tunnel. This chain is Small ribosomal subunit protein uS9A, found in Saccharomyces cerevisiae (strain ATCC 204508 / S288c) (Baker's yeast).